A 588-amino-acid chain; its full sequence is Mitochondrial tRNA methylthiotransferase CDK5RAP1 (588 aa).

A mitochondrion-targeting transit peptide spans 1-30 (MHPLRCVLQVQRLSAPFTSMCWVLLRTCRA). Disordered regions lie at residues 33 to 53 (SVSSTPCPSPEAKSSEAQKDF) and 70 to 91 (ASVPQEKPSSPEVEDPPPYLSG). Residues 99-219 (RKVYLETYGC…LPRLLAVVES (121 aa)) enclose the MTTase N-terminal domain. Residues Cys108, Cys144, Cys182, Cys257, Cys261, and Cys264 each coordinate [4Fe-4S] cluster. In terms of domain architecture, Radical SAM core spans 243-498 (SPSATSAFVS…TVFREEASKA (256 aa)). The TRAM domain maps to 500 to 575 (KTSVGCSQLV…SQTLKGHILC (76 aa)).

It belongs to the methylthiotransferase family. MiaB subfamily. Interacts with CDK5R1 (p35 form). CDK5RAP1, CDK5RAP2 and CDK5RAP3 show competitive binding to CDK5R1. Probably forms a complex with CDK5R1 and CDK5. [4Fe-4S] cluster is required as a cofactor. In terms of tissue distribution, expressed in brain, liver, skeletal muscle and heart.

It is found in the mitochondrion. It carries out the reaction N(6)-dimethylallyladenosine(37) in tRNA + (sulfur carrier)-SH + AH2 + 2 S-adenosyl-L-methionine = 2-methylsulfanyl-N(6)-dimethylallyladenosine(37) in tRNA + (sulfur carrier)-H + 5'-deoxyadenosine + L-methionine + A + S-adenosyl-L-homocysteine + 2 H(+). In terms of biological role, methylthiotransferase that catalyzes the conversion of N6-(dimethylallyl)adenosine (i(6)A) to 2-methylthio-N6-(dimethylallyl)adenosine (ms(2)i(6)A) at position 37 (adjacent to the 3'-end of the anticodon) of four mitochondrial DNA-encoded tRNAs (Ser(UCN), Phe, Tyr and Trp). Essential for efficient and highly accurate protein translation by the ribosome. Specifically inhibits CDK5 activation by CDK5R1. Essential for efficient mitochondrial protein synthesis and respiratory chain. This chain is Mitochondrial tRNA methylthiotransferase CDK5RAP1, found in Mus musculus (Mouse).